A 121-amino-acid polypeptide reads, in one-letter code: Large ribosomal subunit protein uL14c (121 aa).

The protein belongs to the universal ribosomal protein uL14 family. In terms of assembly, part of the 50S ribosomal subunit.

It is found in the plastid. The protein localises to the organellar chromatophore. Functionally, binds to 23S rRNA. The sequence is that of Large ribosomal subunit protein uL14c from Paulinella chromatophora.